The following is a 408-amino-acid chain: UDP-N-acetylglucosamine--dolichyl-phosphate N-acetylglucosaminephosphotransferase (408 aa).

At 1–10 the chain is on the lumenal side; that stretch reads MWAFPELPMP. A helical transmembrane segment spans residues 11–38; it reads LLVNLIGSLMGFVATVTLIPAFRGHFIA. The Cytoplasmic portion of the chain corresponds to 39–58; the sequence is ARLCGQDLNKSSREQIPESQ. UDP-N-acetyl-alpha-D-glucosamine contacts are provided by residues 44-46 and glutamate 56; that span reads QDL. A helical membrane pass occupies residues 59–78; that stretch reads GVISGAVFLIILFCFIPFPF. Residues 79-91 lie on the Lumenal side of the membrane; that stretch reads LNCFVEQQCKAFP. The helical transmembrane segment at 92–118 threads the bilayer; the sequence is HHEFVALIGALLAICCMIFLGFADDVL. Topologically, residues 119–121 are cytoplasmic; the sequence is NLR. Residues 122-143 form a helical membrane-spanning segment; sequence WRHKLLLPTAASLPLLMVYFTN. Dolichyl phosphate is bound at residue lysine 125. Topologically, residues 144–166 are lumenal; sequence FGNTTIVVPKPLRPILGLHLDLG. Asparagine 146 carries N-linked (GlcNAc...) asparagine glycosylation. The helical transmembrane segment at 167 to 186 threads the bilayer; the sequence is ILYYVYMGLLAVFCTNAINI. A dolichyl phosphate-binding site is contributed by 178 to 186; it reads VFCTNAINI. Asparagine 185 contacts Mg(2+). Residues 187–192 are Cytoplasmic-facing; it reads LAGING. Residue asparagine 191 participates in UDP-N-acetyl-alpha-D-glucosamine binding. Residues 193-213 traverse the membrane as a helical segment; that stretch reads LEAGQSLVISASIIVFNLVEL. Topologically, residues 214–218 are lumenal; the sequence is DGDYR. A helical membrane pass occupies residues 219-242; sequence DDHIFSLYFMIPFFFTTLGLLYHN. Over 243–250 the chain is Cytoplasmic; it reads WYPSRVFV. A helical membrane pass occupies residues 251-269; sequence GDTFCYFAGMTFAVVGILG. A Mg(2+)-binding site is contributed by aspartate 252. Over 270–271 the chain is Lumenal; sequence HF. The helical transmembrane segment at 272–293 threads the bilayer; sequence SKTMLLFFMPQVFNFLYSLPQL. Residues 294–375 lie on the Cytoplasmic side of the membrane; sequence LHIIPCPRHR…LLLKVFGPMH (82 aa). 301–303 is a UDP-N-acetyl-alpha-D-glucosamine binding site; it reads RHR. A helical transmembrane segment spans residues 376 to 400; sequence ERNLTLLLLLLQVVGSAVTFSIRYQ. The Lumenal portion of the chain corresponds to 401 to 408; the sequence is LVRLFYDV.

Belongs to the glycosyltransferase 4 family. As to quaternary structure, homodimer. Mg(2+) serves as cofactor.

Its subcellular location is the endoplasmic reticulum membrane. The enzyme catalyses a di-trans,poly-cis-dolichyl phosphate + UDP-N-acetyl-alpha-D-glucosamine = an N-acetyl-alpha-D-glucosaminyl-diphospho-di-trans,poly-cis-dolichol + UMP. It functions in the pathway protein modification; protein glycosylation. With respect to regulation, inhibited by natural nucleoside antibiotic tunicamycin, which acts as a structural analog and competitor of UDP-GlcNAc. Activated by Man-P-Dol. Activated by manganese. Inhibited by diumycin. Functionally, UDP-N-acetylglucosamine--dolichyl-phosphate N-acetylglucosaminephosphotransferase that operates in the biosynthetic pathway of dolichol-linked oligosaccharides, the glycan precursors employed in protein asparagine (N)-glycosylation. The assembly of dolichol-linked oligosaccharides begins on the cytosolic side of the endoplasmic reticulum membrane and finishes in its lumen. The sequential addition of sugars to dolichol pyrophosphate produces dolichol-linked oligosaccharides containing fourteen sugars, including two GlcNAcs, nine mannoses and three glucoses. Once assembled, the oligosaccharide is transferred from the lipid to nascent proteins by oligosaccharyltransferases. Catalyzes the initial step of dolichol-linked oligosaccharide biosynthesis, transfering GlcNAc-1-P from cytosolic UDP-GlcNAc onto the carrier lipid dolichyl phosphate (P-dolichol), yielding GlcNAc-P-P-dolichol embedded in the cytoplasmic leaflet of the endoplasmic reticulum membrane. This chain is UDP-N-acetylglucosamine--dolichyl-phosphate N-acetylglucosaminephosphotransferase, found in Bos taurus (Bovine).